The primary structure comprises 990 residues: Leucine--tRNA ligase (990 aa).

The 'HIGH' region motif lies at 74 to 85 (PYPSGKGLHVGH). Residues 573-602 (LPINLPDVPDYSPKTFDPEDAESDPEAPLS) form a disordered region. The 'KMSKS' region motif lies at 763–767 (KMGKS). ATP is bound at residue lysine 766.

Belongs to the class-I aminoacyl-tRNA synthetase family.

The protein resides in the cytoplasm. It carries out the reaction tRNA(Leu) + L-leucine + ATP = L-leucyl-tRNA(Leu) + AMP + diphosphate. This chain is Leucine--tRNA ligase, found in Bifidobacterium adolescentis (strain ATCC 15703 / DSM 20083 / NCTC 11814 / E194a).